A 740-amino-acid chain; its full sequence is ATP-dependent RNA helicase DDX1 (740 aa).

The tract at residues 1 to 295 (MAAFSEMGVM…APKALIVEPS (295 aa)) is necessary for interaction with HNRNPK. Residues 1–448 (MAAFSEMGVM…DTVHHVVVPV (448 aa)) are interaction with dsRNA. Residues 1–525 (MAAFSEMGVM…KIDCDNLEQY (525 aa)) form a necessary for interaction with RELA region. The Helicase ATP-binding domain occupies 2–428 (AAFSEMGVMP…SEKIMHFPTW (427 aa)). Position 46 to 53 (46 to 53 (AETGSGKT)) interacts with ATP. Positions 70-247 (DQQEGKKGKT…LKFNFGEEEF (178 aa)) constitute a B30.2/SPRY domain. An N6-acetyllysine mark is found at lysine 239 and lysine 268. Residue lysine 281 is modified to N6-acetyllysine; alternate. A Glycyl lysine isopeptide (Lys-Gly) (interchain with G-Cter in SUMO2); alternate cross-link involves residue lysine 281. Positions 370–373 (DEAD) match the DEAD box motif. Serine 481 is modified (phosphoserine). The Helicase C-terminal domain occupies 493–681 (KGEYAVRAIK…QVEPDIKVPV (189 aa)). Residues 525–740 (YFMQQGGGPD…YLPNQLFRTF (216 aa)) are necessary for interaction with HNRNPK.

It belongs to the DEAD box helicase family. DDX1 subfamily. In terms of assembly, found in a multi-helicase-TICAM1 complex at least composed of DHX36, DDX1, DDX21 and TICAM1; this complex exists in resting cells with or without poly(I:C) RNA ligand stimulation. Interacts with DHX36. Interacts (via B30.2/SPRY domain) with DDX21 (via N-terminus); this interaction serves as bridges to TICAM1. Interacts with FAM98A (via N- and C-terminus). Interacts with PHF5A (via C-terminus). Interacts with MBNL1. Interacts with CSTF2. Interacts with HNRNPK. Interacts with ATM. Interacts with RELA (via C-terminus). Component of the tRNA-splicing ligase complex. Interacts with PQBP1. Interacts with ERCC6. In terms of processing, phosphorylated by ATM kinase; phosphorylation is increased in response to ionizing radiation (IR).

The protein localises to the nucleus. The protein resides in the cytoplasm. Its subcellular location is the cytoplasmic granule. It is found in the cytosol. It localises to the mitochondrion. It catalyses the reaction ATP + H2O = ADP + phosphate + H(+). Functionally, acts as an ATP-dependent RNA helicase, able to unwind both RNA-RNA and RNA-DNA duplexes. Possesses 5' single-stranded RNA overhang nuclease activity. Possesses ATPase activity on various RNA, but not DNA polynucleotides. May play a role in RNA clearance at DNA double-strand breaks (DSBs), thereby facilitating the template-guided repair of transcriptionally active regions of the genome. Together with RELA, acts as a coactivator to enhance NF-kappa-B-mediated transcriptional activation. Acts as a positive transcriptional regulator of cyclin CCND2 expression. Binds to the cyclin CCND2 promoter region. Associates with chromatin at the NF-kappa-B promoter region via association with RELA. Binds to poly(A) RNA. May be involved in 3'-end cleavage and polyadenylation of pre-mRNAs. Component of the tRNA-splicing ligase complex required to facilitate the enzymatic turnover of catalytic subunit RTCB: together with archease (ZBTB8OS), acts by facilitating the guanylylation of RTCB, a key intermediate step in tRNA ligation. Component of a multi-helicase-TICAM1 complex that acts as a cytoplasmic sensor of viral double-stranded RNA (dsRNA) and plays a role in the activation of a cascade of antiviral responses including the induction of pro-inflammatory cytokines via the adapter molecule TICAM1. Specifically binds (via helicase ATP-binding domain) on both short and long poly(I:C) dsRNA. The chain is ATP-dependent RNA helicase DDX1 (DDX1) from Macaca fascicularis (Crab-eating macaque).